The primary structure comprises 295 residues: Mediator of RNA polymerase II transcription subunit 27 (295 aa).

It belongs to the Mediator complex subunit 27 family. In terms of assembly, component of the Mediator complex.

The protein localises to the nucleus. Component of the Mediator complex, a coactivator involved in the regulated transcription of nearly all RNA polymerase II-dependent genes. Mediator functions as a bridge to convey information from gene-specific regulatory proteins to the basal RNA polymerase II transcription machinery. Mediator is recruited to promoters by direct interactions with regulatory proteins and serves as a scaffold for the assembly of a functional preinitiation complex with RNA polymerase II and the general transcription factors. This chain is Mediator of RNA polymerase II transcription subunit 27 (MED27), found in Anopheles gambiae (African malaria mosquito).